The primary structure comprises 283 residues: 2-dehydro-3-deoxyphosphooctonate aldolase (283 aa).

Belongs to the KdsA family.

The protein resides in the cytoplasm. It catalyses the reaction D-arabinose 5-phosphate + phosphoenolpyruvate + H2O = 3-deoxy-alpha-D-manno-2-octulosonate-8-phosphate + phosphate. It participates in carbohydrate biosynthesis; 3-deoxy-D-manno-octulosonate biosynthesis; 3-deoxy-D-manno-octulosonate from D-ribulose 5-phosphate: step 2/3. It functions in the pathway bacterial outer membrane biogenesis; lipopolysaccharide biosynthesis. This Vibrio campbellii (strain ATCC BAA-1116) protein is 2-dehydro-3-deoxyphosphooctonate aldolase.